Consider the following 97-residue polypeptide: YcgL domain-containing protein Tcr_0238 (97 aa).

In terms of domain architecture, YcgL spans 3-87 (LLVSAYKSAK…SEIEKMGDMP (85 aa)). Residues 78–97 (SEIEKMGDMPPPPEHLDNIF) are disordered.

This Hydrogenovibrio crunogenus (strain DSM 25203 / XCL-2) (Thiomicrospira crunogena) protein is YcgL domain-containing protein Tcr_0238.